Reading from the N-terminus, the 369-residue chain is Aminomethyltransferase (369 aa).

This sequence belongs to the GcvT family. The glycine cleavage system is composed of four proteins: P, T, L and H.

The enzyme catalyses N(6)-[(R)-S(8)-aminomethyldihydrolipoyl]-L-lysyl-[protein] + (6S)-5,6,7,8-tetrahydrofolate = N(6)-[(R)-dihydrolipoyl]-L-lysyl-[protein] + (6R)-5,10-methylene-5,6,7,8-tetrahydrofolate + NH4(+). Its function is as follows. The glycine cleavage system catalyzes the degradation of glycine. This is Aminomethyltransferase from Xanthomonas oryzae pv. oryzae (strain PXO99A).